A 380-amino-acid chain; its full sequence is Chorismate synthase (380 aa).

Positions 48 and 53 each coordinate NADP(+). FMN is bound by residues 126-128, Gly284, 299-303, and Arg326; these read RAS and KPTSS.

It belongs to the chorismate synthase family. Requires FMNH2 as cofactor.

It catalyses the reaction 5-O-(1-carboxyvinyl)-3-phosphoshikimate = chorismate + phosphate. Its pathway is metabolic intermediate biosynthesis; chorismate biosynthesis; chorismate from D-erythrose 4-phosphate and phosphoenolpyruvate: step 7/7. Catalyzes the anti-1,4-elimination of the C-3 phosphate and the C-6 proR hydrogen from 5-enolpyruvylshikimate-3-phosphate (EPSP) to yield chorismate, which is the branch point compound that serves as the starting substrate for the three terminal pathways of aromatic amino acid biosynthesis. This reaction introduces a second double bond into the aromatic ring system. The protein is Chorismate synthase of Ignicoccus hospitalis (strain KIN4/I / DSM 18386 / JCM 14125).